The sequence spans 535 residues: Xylan 1,3-beta-xylosidase (535 aa).

Residue D16 is the Proton acceptor of the active site. E189 (proton donor) is an active-site residue.

The protein belongs to the glycosyl hydrolase 43 family.

The enzyme catalyses Hydrolysis of successive xylose residues from the non-reducing termini of (1-&gt;3)-beta-D-xylans.. With respect to regulation, inhibited by Ag(+), Cu(2+), Hg(2+), Mn(2+), Pb(2+), Zn(2+) and p-chloromercuric benzoic acid. Beta-1,3-xylosidase that hydrolyzes beta-1,3-xylooligosaccharides to D-xylose. The sequence is that of Xylan 1,3-beta-xylosidase (xloA) from Vibrio sp.